The primary structure comprises 263 residues: 3-methyl-2-oxobutanoate hydroxymethyltransferase (263 aa).

Residues D45 and D84 each contribute to the Mg(2+) site. Residues 45–46 (DS), D84, and K112 contribute to the 3-methyl-2-oxobutanoate site. E114 is a Mg(2+) binding site. E180 serves as the catalytic Proton acceptor.

Belongs to the PanB family. As to quaternary structure, homodecamer; pentamer of dimers. It depends on Mg(2+) as a cofactor.

The protein localises to the cytoplasm. It catalyses the reaction 3-methyl-2-oxobutanoate + (6R)-5,10-methylene-5,6,7,8-tetrahydrofolate + H2O = 2-dehydropantoate + (6S)-5,6,7,8-tetrahydrofolate. It participates in cofactor biosynthesis; (R)-pantothenate biosynthesis; (R)-pantoate from 3-methyl-2-oxobutanoate: step 1/2. Its function is as follows. Catalyzes the reversible reaction in which hydroxymethyl group from 5,10-methylenetetrahydrofolate is transferred onto alpha-ketoisovalerate to form ketopantoate. This is 3-methyl-2-oxobutanoate hydroxymethyltransferase from Klebsiella pneumoniae subsp. pneumoniae (strain ATCC 700721 / MGH 78578).